Reading from the N-terminus, the 610-residue chain is Solute carrier family 23 member 3 (610 aa).

Over residues 1 to 16 (MSRSPLNPSQLRSVGS) the composition is skewed to polar residues. A disordered region spans residues 1-32 (MSRSPLNPSQLRSVGSQDALAPLPPPAPQNPS). The Cytoplasmic portion of the chain corresponds to 1–49 (MSRSPLNPSQLRSVGSQDALAPLPPPAPQNPSTHSWDPLCGSLPWGLSC). Residues 50–70 (LLALQHVLVMASLLCVSHLLL) traverse the membrane as a helical segment. Residues 71-85 (LCSLSPGGLSYSPSQ) lie on the Extracellular side of the membrane. Residues 86 to 106 (LLASSFFSCGMSTILQTWMGS) form a helical membrane-spanning segment. Residues 107 to 164 (RLPLVQAPSLEFLIPALVLTSQKLPRAIQTPGNSSLMLHLCRGPSCHGLGHWNTSLQE) lie on the Cytoplasmic side of the membrane. A helical membrane pass occupies residues 165 to 185 (VSGAVVVSGLLQGMMGLLGSP). Topologically, residues 186 to 187 (GH) are extracellular. A helical membrane pass occupies residues 188-208 (VFPHCGPLVLAPSLVVAGLSA). The Cytoplasmic segment spans residues 209-211 (HRE). A helical membrane pass occupies residues 212 to 232 (VAQFCFTHWGLALLVILLMVV). Topologically, residues 233 to 266 (CSQHLGSCQFHVCPWRRASTSSTHTPLPVFRLLS) are extracellular. The helical transmembrane segment at 267–287 (VLIPVACVWIVSAFVGFSVIP) threads the bilayer. At 288 to 316 (QELSAPTKAPWIWLPHPGEWNWPLLTPRA) the chain is on the cytoplasmic side. The chain crosses the membrane as a helical span at residues 317-337 (LAAGISMALAASTSSLGCYAL). At 338 to 355 (CGRLLHLPPPPPHACSRG) the chain is on the extracellular side. Residues 356-376 (LSLEGLGSVLAGLLGSPMGTA) traverse the membrane as a helical segment. The Cytoplasmic segment spans residues 377–394 (SSFPNVGKVGLIQAGSQQ). The helical transmembrane segment at 395 to 414 (VAHLVGLLCVGLGLSPRLAQ) threads the bilayer. The Extracellular portion of the chain corresponds to 415-423 (LLTTIPLPV). Residues 424-446 (VGGVLGVTQAVVLSAGFSSFYLA) traverse the membrane as a helical segment. Topologically, residues 447 to 452 (DIDSGR) are cytoplasmic. Residues 453–472 (NIFIVGFSIFMALLLPRWFR) form a helical membrane-spanning segment. At 473–486 (EAPVLFSTGWSPLD) the chain is on the extracellular side. Residues 487–507 (VLLHSLLTQPIFLAGLSGFLL) form a helical membrane-spanning segment. The Cytoplasmic segment spans residues 508–610 (ENTIPGTQLE…SSREGFRSQK (103 aa)). The segment at 571–610 (PEDPGDEEGGSSEPEEMADLLPGSGEPCPESSREGFRSQK) is disordered. Residues 573 to 588 (DPGDEEGGSSEPEEMA) are compositionally biased toward acidic residues. The segment covering 601 to 610 (SSREGFRSQK) has biased composition (basic and acidic residues).

The protein belongs to the nucleobase:cation symporter-2 (NCS2) (TC 2.A.40) family.

It is found in the membrane. It carries out the reaction hypoxanthine(out) + Na(+)(out) = hypoxanthine(in) + Na(+)(in). Functionally, acts as a sodium-dependent hypoxanthine transporter. May show xanthine-hypoxanthine exchange activity. This chain is Solute carrier family 23 member 3 (SLC23A3), found in Homo sapiens (Human).